We begin with the raw amino-acid sequence, 221 residues long: Lipoprotein-releasing system ATP-binding protein LolD (221 aa).

The ABC transporter domain maps to 6–220; that stretch reads LILKNISKHY…YKLKHGLLNI (215 aa). 42 to 49 contributes to the ATP binding site; sequence GSSGSGKS.

Belongs to the ABC transporter superfamily. Lipoprotein translocase (TC 3.A.1.125) family. As to quaternary structure, the complex is composed of two ATP-binding proteins (LolD) and two transmembrane proteins (LolC and LolE).

The protein resides in the cell inner membrane. In terms of biological role, part of the ABC transporter complex LolCDE involved in the translocation of mature outer membrane-directed lipoproteins, from the inner membrane to the periplasmic chaperone, LolA. Responsible for the formation of the LolA-lipoprotein complex in an ATP-dependent manner. The protein is Lipoprotein-releasing system ATP-binding protein LolD of Rickettsia felis (strain ATCC VR-1525 / URRWXCal2) (Rickettsia azadi).